Consider the following 469-residue polypeptide: 3-isopropylmalate dehydratase large subunit (469 aa).

[4Fe-4S] cluster is bound by residues Cys-349, Cys-409, and Cys-412.

This sequence belongs to the aconitase/IPM isomerase family. LeuC type 1 subfamily. As to quaternary structure, heterodimer of LeuC and LeuD. It depends on [4Fe-4S] cluster as a cofactor.

The enzyme catalyses (2R,3S)-3-isopropylmalate = (2S)-2-isopropylmalate. The protein operates within amino-acid biosynthesis; L-leucine biosynthesis; L-leucine from 3-methyl-2-oxobutanoate: step 2/4. In terms of biological role, catalyzes the isomerization between 2-isopropylmalate and 3-isopropylmalate, via the formation of 2-isopropylmaleate. This is 3-isopropylmalate dehydratase large subunit from Methylorubrum populi (strain ATCC BAA-705 / NCIMB 13946 / BJ001) (Methylobacterium populi).